Reading from the N-terminus, the 705-residue chain is Polyribonucleotide nucleotidyltransferase (705 aa).

The Mg(2+) site is built by aspartate 486 and aspartate 492. The 60-residue stretch at 553–612 folds into the KH domain; sequence PRIYTMKINPEKIKDVIGKGGSVIRALTDETGTTIEIEDDGTIKIAATDGDKAKHAIRRI. The region spanning 622–690 is the S1 motif domain; that stretch reads GRIYAGKVTR…RQGRIRLSIK (69 aa).

The protein belongs to the polyribonucleotide nucleotidyltransferase family. In terms of assembly, component of the RNA degradosome, which is a multiprotein complex involved in RNA processing and mRNA degradation. Mg(2+) is required as a cofactor.

Its subcellular location is the cytoplasm. The catalysed reaction is RNA(n+1) + phosphate = RNA(n) + a ribonucleoside 5'-diphosphate. In terms of biological role, involved in mRNA degradation. Catalyzes the phosphorolysis of single-stranded polyribonucleotides processively in the 3'- to 5'-direction. In Yersinia pestis bv. Antiqua (strain Nepal516), this protein is Polyribonucleotide nucleotidyltransferase.